The sequence spans 366 residues: Cytochrome c peroxidase, mitochondrial (366 aa).

Residue His123 is the Proton acceptor of the active site. The span at 195-206 (IEWRPGRVDDNT) shows a compositional bias: basic and acidic residues. A disordered region spans residues 195-218 (IEWRPGRVDDNTASKVPPNGRLPD). His247 is a binding site for heme b. The active-site Tryptophan radical intermediate is the Trp263.

It belongs to the peroxidase family. Cytochrome c peroxidase subfamily. Forms a one-to-one complex with cytochrome c. It depends on heme b as a cofactor.

The protein resides in the mitochondrion matrix. The protein localises to the mitochondrion intermembrane space. It catalyses the reaction 2 Fe(II)-[cytochrome c] + H2O2 + 2 H(+) = 2 Fe(III)-[cytochrome c] + 2 H2O. Functionally, destroys radicals which are normally produced within the cells and which are toxic to biological systems. In Candida albicans (strain SC5314 / ATCC MYA-2876) (Yeast), this protein is Cytochrome c peroxidase, mitochondrial (CCP1).